A 124-amino-acid polypeptide reads, in one-letter code: Insulin growth factor-like family member 4 (124 aa).

The signal sequence occupies residues 1–19 (MVPRISAAIFIFELLGSNS). 2 N-linked (GlcNAc...) asparagine glycosylation sites follow: Asn57 and Asn84.

It belongs to the IGFL family. Detected in the cerebellum.

It localises to the secreted. The sequence is that of Insulin growth factor-like family member 4 (IGFL4) from Homo sapiens (Human).